The sequence spans 261 residues: RING finger protein 208 (261 aa).

A disordered region spans residues 83-106; it reads PALEGAPHTPPLPRRPRKGSSELG. At Ser-102 the chain carries Phosphoserine. The RING-type zinc finger occupies 143 to 190; the sequence is CPTCGHSYNVTQRRPRVLSCLHSVCEQCLQILYESCPKYKFISCPTCR.

In Homo sapiens (Human), this protein is RING finger protein 208 (RNF208).